The sequence spans 428 residues: Serine--tRNA ligase (428 aa).

235–237 contributes to the L-serine binding site; sequence TAE. 266–268 contributes to the ATP binding site; the sequence is RSE. E289 is an L-serine binding site. 353-356 lines the ATP pocket; sequence EISS. S389 contributes to the L-serine binding site.

Belongs to the class-II aminoacyl-tRNA synthetase family. Type-1 seryl-tRNA synthetase subfamily. In terms of assembly, homodimer. The tRNA molecule binds across the dimer.

It is found in the cytoplasm. It catalyses the reaction tRNA(Ser) + L-serine + ATP = L-seryl-tRNA(Ser) + AMP + diphosphate + H(+). The catalysed reaction is tRNA(Sec) + L-serine + ATP = L-seryl-tRNA(Sec) + AMP + diphosphate + H(+). It participates in aminoacyl-tRNA biosynthesis; selenocysteinyl-tRNA(Sec) biosynthesis; L-seryl-tRNA(Sec) from L-serine and tRNA(Sec): step 1/1. In terms of biological role, catalyzes the attachment of serine to tRNA(Ser). Is also able to aminoacylate tRNA(Sec) with serine, to form the misacylated tRNA L-seryl-tRNA(Sec), which will be further converted into selenocysteinyl-tRNA(Sec). In Shewanella denitrificans (strain OS217 / ATCC BAA-1090 / DSM 15013), this protein is Serine--tRNA ligase.